The primary structure comprises 101 residues: Putative septation protein SpoVG (101 aa).

The protein belongs to the SpoVG family.

Functionally, could be involved in septation. This is Putative septation protein SpoVG from Staphylococcus saprophyticus subsp. saprophyticus (strain ATCC 15305 / DSM 20229 / NCIMB 8711 / NCTC 7292 / S-41).